Reading from the N-terminus, the 243-residue chain is Tyrosine recombinase XerD-like (243 aa).

Residues 1 to 72 form the Core-binding (CB) domain; the sequence is MKQAIESFIQ…AVNQFLYFLY (72 aa). The 153-residue stretch at 91–243 folds into the Tyr recombinase domain; sequence SVKKKLERED…KTSMSLEKFR (153 aa). Active-site residues include Lys-149 and Arg-210.

It belongs to the 'phage' integrase family. XerD-like subfamily.

It localises to the cytoplasm. In terms of biological role, putative tyrosine recombinase. Not involved in the cutting and rejoining of the recombining DNA molecules on dif(SL) site. The chain is Tyrosine recombinase XerD-like from Streptococcus suis (strain 98HAH33).